Here is a 1443-residue protein sequence, read N- to C-terminus: Cleavage and polyadenylation specificity factor subunit 1 (1443 aa).

4 disordered regions span residues 404–435, 546–570, 715–777, and 901–921; these read PASAVREAADKEEPPSKKKRVDATAGWSAAGK, EEDNPKGEGTEQEPSTTPEADDDGR, GGAR…PAPF, and FREKKPKPSKKKAEGGGAEEG. The span at 410 to 419 shows a compositional bias: basic and acidic residues; the sequence is EAADKEEPPS. Ser756 and Ser766 each carry phosphoserine. Basic and acidic residues predominate over residues 758-775; the sequence is SKEEARRSSQPPADRDPA. The short motif at 893-908 is the Nuclear localization signal element; the sequence is KKVPHNINFREKKPKP.

It belongs to the CPSF1 family. Component of the cleavage and polyadenylation specificity factor (CPSF) complex, composed of CPSF1, CPSF2, CPSF3, CPSF4 and FIP1L1. Found in a complex with CPSF1, FIP1L1 and PAPOLA. Interacts with FIP1L1, TENT2/GLD2 and SRRM1. Interacts with TUT1; the interaction is direct and mediates the recruitment of the CPSF complex on the 3'UTR of selected pre-mRNAs. Post-translationally, the N-terminus is blocked. In terms of tissue distribution, widely expressed, with high expression in the retina.

It localises to the nucleus. Its subcellular location is the nucleoplasm. In terms of biological role, component of the cleavage and polyadenylation specificity factor (CPSF) complex that plays a key role in pre-mRNA 3'-end formation, recognizing the AAUAAA signal sequence and interacting with poly(A) polymerase and other factors to bring about cleavage and poly(A) addition. This subunit is involved in the RNA recognition step of the polyadenylation reaction. May play a role in eye morphogenesis and the development of retinal ganglion cell projections to the midbrain. This chain is Cleavage and polyadenylation specificity factor subunit 1 (CPSF1), found in Homo sapiens (Human).